A 513-amino-acid polypeptide reads, in one-letter code: MEMAFEQELILVLDFGSQYNQLITRRIREMGVYSELHDHEISIEEIKKMNPKGIILSGGPNSVYEEGSFTVDPEIFNLGVPVMGICYGMQLMTKLLGGSVERANEREYGKAVIKAETHSLFTKLPEEQTVWMSHSDKVINLPEGFNVIAHSPSCKYAAIENPERNLYGVQFHPEVRHSEYGNDLLRNFIREICKCTGEWTMENFIEIEIEKIREKVGDRKVICAMSGGVDSSVVAVLIHKAIGDQLTCIFVDHGLLRKGEGDMVMKQFGEGFNMNIIRVDAKERFMSKLAGVSDPEQKRKIIGNEFVYLFDEEAAKLKDADFLAQGTLYTDIIESGTKTAQTIKSHHNVGGLPEDMQFELIEPVNTLFKDEVRALGIELGIPEHLVWRQPFPGPGLGIRVLGEITEEKLEIVRESDAILREVIAEEGLERDIWQYFTVLPDIRSVGVMGDYRTYDYTVGVRAVTSIDGMTSDFARIDWEVLQKVSSRIVNEVDHVNRVVYDITSKPPSTIEWE.

The Glutamine amidotransferase type-1 domain occupies 9 to 198 (LILVLDFGSQ…IREICKCTGE (190 aa)). Cys86 functions as the Nucleophile in the catalytic mechanism. Active-site residues include His172 and Glu174. The region spanning 199-388 (WTMENFIEIE…LGIPEHLVWR (190 aa)) is the GMPS ATP-PPase domain. 226–232 (SGGVDSS) contributes to the ATP binding site.

In terms of assembly, homodimer.

It carries out the reaction XMP + L-glutamine + ATP + H2O = GMP + L-glutamate + AMP + diphosphate + 2 H(+). The protein operates within purine metabolism; GMP biosynthesis; GMP from XMP (L-Gln route): step 1/1. Catalyzes the synthesis of GMP from XMP. This chain is GMP synthase [glutamine-hydrolyzing], found in Macrococcus caseolyticus (strain JCSC5402) (Macrococcoides caseolyticum).